A 1072-amino-acid chain; its full sequence is DNA-directed RNA polymerase subunit beta (1072 aa).

The protein belongs to the RNA polymerase beta chain family. As to quaternary structure, in plastids the minimal PEP RNA polymerase catalytic core is composed of four subunits: alpha, beta, beta', and beta''. When a (nuclear-encoded) sigma factor is associated with the core the holoenzyme is formed, which can initiate transcription.

It localises to the plastid. It is found in the chloroplast. It catalyses the reaction RNA(n) + a ribonucleoside 5'-triphosphate = RNA(n+1) + diphosphate. Its function is as follows. DNA-dependent RNA polymerase catalyzes the transcription of DNA into RNA using the four ribonucleoside triphosphates as substrates. The protein is DNA-directed RNA polymerase subunit beta of Arabis hirsuta (Hairy rock-cress).